A 201-amino-acid polypeptide reads, in one-letter code: 3-isopropylmalate dehydratase small subunit (201 aa).

This sequence belongs to the LeuD family. LeuD type 1 subfamily. In terms of assembly, heterodimer of LeuC and LeuD.

It catalyses the reaction (2R,3S)-3-isopropylmalate = (2S)-2-isopropylmalate. It functions in the pathway amino-acid biosynthesis; L-leucine biosynthesis; L-leucine from 3-methyl-2-oxobutanoate: step 2/4. Functionally, catalyzes the isomerization between 2-isopropylmalate and 3-isopropylmalate, via the formation of 2-isopropylmaleate. The chain is 3-isopropylmalate dehydratase small subunit from Methylorubrum extorquens (strain CM4 / NCIMB 13688) (Methylobacterium extorquens).